We begin with the raw amino-acid sequence, 185 residues long: Iron-sulfur assembly protein 2 (185 aa).

Fe cation contacts are provided by C89, C175, and C177.

The protein belongs to the HesB/IscA family.

It is found in the mitochondrion matrix. Involved in the assembly of mitochondrial and cytoplasmic iron-sulfur proteins. Probably involved in the binding of an intermediate of Fe/S cluster assembly. The chain is Iron-sulfur assembly protein 2 (ISA2) from Saccharomyces cerevisiae (strain ATCC 204508 / S288c) (Baker's yeast).